The sequence spans 165 residues: Ribosome maturation factor RimM (165 aa).

The PRC barrel domain occupies 92 to 163 (EARHYWADLE…RVVVDPPEGL (72 aa)).

The protein belongs to the RimM family. Binds ribosomal protein uS19.

The protein resides in the cytoplasm. Functionally, an accessory protein needed during the final step in the assembly of 30S ribosomal subunit, possibly for assembly of the head region. Essential for efficient processing of 16S rRNA. May be needed both before and after RbfA during the maturation of 16S rRNA. It has affinity for free ribosomal 30S subunits but not for 70S ribosomes. The protein is Ribosome maturation factor RimM of Anaeromyxobacter sp. (strain Fw109-5).